Reading from the N-terminus, the 139-residue chain is D-ribose pyranase (139 aa).

His20 serves as the catalytic Proton donor. Residues Asp28, His106, and 128–130 (YAN) contribute to the substrate site.

The protein belongs to the RbsD / FucU family. RbsD subfamily. Homodecamer.

It is found in the cytoplasm. It catalyses the reaction beta-D-ribopyranose = beta-D-ribofuranose. It participates in carbohydrate metabolism; D-ribose degradation; D-ribose 5-phosphate from beta-D-ribopyranose: step 1/2. In terms of biological role, catalyzes the interconversion of beta-pyran and beta-furan forms of D-ribose. The chain is D-ribose pyranase from Escherichia coli O127:H6 (strain E2348/69 / EPEC).